A 176-amino-acid polypeptide reads, in one-letter code: Nucleoside triphosphate/diphosphate phosphatase (176 aa).

Arginine 23 serves as the catalytic Proton donor. Mg(2+)-binding residues include asparagine 87, aspartate 103, aspartate 105, aspartate 107, aspartate 120, and glutamate 123.

Belongs to the Ntdp family. The cofactor is Mg(2+).

The enzyme catalyses a ribonucleoside 5'-triphosphate + H2O = a ribonucleoside 5'-diphosphate + phosphate + H(+). It catalyses the reaction a ribonucleoside 5'-diphosphate + H2O = a ribonucleoside 5'-phosphate + phosphate + H(+). Its function is as follows. Has nucleoside phosphatase activity towards nucleoside triphosphates and nucleoside diphosphates. The polypeptide is Nucleoside triphosphate/diphosphate phosphatase (Bacillus velezensis (strain DSM 23117 / BGSC 10A6 / LMG 26770 / FZB42) (Bacillus amyloliquefaciens subsp. plantarum)).